The following is a 450-amino-acid chain: ATP-dependent protease ATPase subunit HslU (450 aa).

ATP is bound by residues Ile-18 and 60–65 (GVGKTE). A compositionally biased stretch (polar residues) spans 140–151 (KTSSSGWAQQQE). The disordered stretch occupies residues 140 to 162 (KTSSSGWAQQQEETPENDDQRGT). ATP-binding residues include Asp-263, Glu-328, and Arg-400.

It belongs to the ClpX chaperone family. HslU subfamily. In terms of assembly, a double ring-shaped homohexamer of HslV is capped on each side by a ring-shaped HslU homohexamer. The assembly of the HslU/HslV complex is dependent on binding of ATP.

It is found in the cytoplasm. In terms of biological role, ATPase subunit of a proteasome-like degradation complex; this subunit has chaperone activity. The binding of ATP and its subsequent hydrolysis by HslU are essential for unfolding of protein substrates subsequently hydrolyzed by HslV. HslU recognizes the N-terminal part of its protein substrates and unfolds these before they are guided to HslV for hydrolysis. This Idiomarina loihiensis (strain ATCC BAA-735 / DSM 15497 / L2-TR) protein is ATP-dependent protease ATPase subunit HslU.